Reading from the N-terminus, the 131-residue chain is Inner membrane protein YecN (131 aa).

The Cytoplasmic segment spans residues 1–107 (MVSALYAVLS…RWRRSGMSAT (107 aa)). Residues 108–128 (WCALLLMVLANLWYMPWELVF) traverse the membrane as a helical segment. Over 129–131 (SLR) the chain is Periplasmic.

The protein resides in the cell inner membrane. This chain is Inner membrane protein YecN (yecN), found in Escherichia coli O6:H1 (strain CFT073 / ATCC 700928 / UPEC).